Here is a 353-residue protein sequence, read N- to C-terminus: Histidine biosynthesis bifunctional protein HisB (353 aa).

A histidinol-phosphatase region spans residues 1–164 (MKNKILFIDR…HITKYIIKHN (164 aa)). Aspartate 9 functions as the Nucleophile in the catalytic mechanism. Residues aspartate 9 and aspartate 11 each contribute to the Mg(2+) site. Aspartate 11 acts as the Proton donor in catalysis. Positions 93, 95, 101, and 103 each coordinate Zn(2+). Aspartate 128 contributes to the Mg(2+) binding site. The segment at 165-353 (RYAEIIRRTK…NMLPTSKGIL (189 aa)) is imidazoleglycerol-phosphate dehydratase.

It in the N-terminal section; belongs to the histidinol-phosphatase family. The protein in the C-terminal section; belongs to the imidazoleglycerol-phosphate dehydratase family. Requires Mg(2+) as cofactor. Zn(2+) is required as a cofactor.

The protein resides in the cytoplasm. The catalysed reaction is D-erythro-1-(imidazol-4-yl)glycerol 3-phosphate = 3-(imidazol-4-yl)-2-oxopropyl phosphate + H2O. It carries out the reaction L-histidinol phosphate + H2O = L-histidinol + phosphate. Its pathway is amino-acid biosynthesis; L-histidine biosynthesis; L-histidine from 5-phospho-alpha-D-ribose 1-diphosphate: step 6/9. It functions in the pathway amino-acid biosynthesis; L-histidine biosynthesis; L-histidine from 5-phospho-alpha-D-ribose 1-diphosphate: step 8/9. The chain is Histidine biosynthesis bifunctional protein HisB from Buchnera aphidicola subsp. Acyrthosiphon pisum (strain Tuc7).